A 388-amino-acid polypeptide reads, in one-letter code: 5-hydroxytryptamine receptor 4 (388 aa).

Residues 1-19 (MDKLDANVSSKEGFGSVEK) are Extracellular-facing. Asn7 carries N-linked (GlcNAc...) asparagine glycosylation. A helical transmembrane segment spans residues 20 to 44 (VVLLTFLSAVILMAILGNLLVMVAV). At 45–54 (CRDRQLRKIK) the chain is on the cytoplasmic side. Residues 55-78 (TNYFIVSLAFADLLVSVLVMPFGA) form a helical membrane-spanning segment. Residues 79 to 92 (IELVQDIWVYGEMF) lie on the Extracellular side of the membrane. Residues 93–117 (CLVRTSLDVLLTTASIFHLCCISLD) traverse the membrane as a helical segment. Cys93 and Cys184 form a disulfide bridge. Asp100 contributes to the serotonin binding site. The Cytoplasmic portion of the chain corresponds to 118–133 (RYYAICCQPLVYRNKM). The chain crosses the membrane as a helical span at residues 134-157 (TPLRIALMLGGCWVIPMFISFLPI). Topologically, residues 158 to 188 (MQGWNNIGIVDLIEKRKFNQNSNSTYCVFMV) are extracellular. Residues 189 to 212 (NKPYAITCSVVAFYIPFLLMVLAY) form a helical membrane-spanning segment. Topologically, residues 213–257 (YRIYVTAKEHARQIQVLQRAGAPAEGRPQPADQHSTHRMRTETKA) are cytoplasmic. The helical transmembrane segment at 258 to 283 (AKTLCIIMGCFCLCWAPFFVTNIVDP) threads the bilayer. Asn279 is a binding site for serotonin. Topologically, residues 284–290 (FIDYTVP) are extracellular. A helical transmembrane segment spans residues 291–314 (GQLWTAFLWLGYINSGLNPFLYAF). Residues 315–388 (LNKSFRRAFL…PLVAAQPIDT (74 aa)) are Cytoplasmic-facing.

This sequence belongs to the G-protein coupled receptor 1 family. As to quaternary structure, interacts (via C-terminus 330-346 AA) with GRK5; this interaction is promoted by 5-HT (serotonin).

Its subcellular location is the cell membrane. It localises to the endosome membrane. In terms of biological role, G-protein coupled receptor for 5-hydroxytryptamine (serotonin), a biogenic hormone that functions as a neurotransmitter, a hormone and a mitogen. Ligand binding causes a conformation change that triggers signaling via guanine nucleotide-binding proteins (G proteins) and modulates the activity of downstream effectors. HTR4 is coupled to G(s) G alpha proteins and mediates activation of adenylate cyclase activity. The protein is 5-hydroxytryptamine receptor 4 (HTR4) of Cavia porcellus (Guinea pig).